Here is a 194-residue protein sequence, read N- to C-terminus: Cytochrome bo(3) ubiquinol oxidase subunit 3 (194 aa).

The Cytoplasmic portion of the chain corresponds to 1 to 18 (MKKKYKIDTNIFSKELLG). Residues 19-41 (FWLYLMSDCIIFCTLFSVYFILV) traverse the membrane as a helical segment. The Extracellular segment spans residues 42-55 (DNVAQGPSGHNIFQ). Residues 56 to 78 (NNLIIIETFLLLFSSFSCNLVLF) traverse the membrane as a helical segment. The Cytoplasmic portion of the chain corresponds to 79 to 84 (EMKNKN). A helical transmembrane segment spans residues 85-107 (LYMVFLWLGITFLLGLLFVFLEL). The Extracellular portion of the chain corresponds to 108-126 (FEFFHLINLGFGPTRSGFL). A helical transmembrane segment spans residues 127-149 (SSFFVLIATHGIHVISGLIWIIV). Over 150-169 (MIKYVYTFNITNLIYYRMLC) the chain is Cytoplasmic. A helical transmembrane segment spans residues 170-192 (LNLFWHFLDIVWVFIFSFVYLFG). Over 193–194 (MV) the chain is Extracellular.

It belongs to the cytochrome c oxidase subunit 3 family. In terms of assembly, heterooctamer of two A chains, two B chains, two C chains and two D chains.

The protein resides in the cell membrane. Its function is as follows. Cytochrome bo(3) ubiquinol terminal oxidase is the component of the aerobic respiratory chain of E.coli that predominates when cells are grown at high aeration. Has proton pump activity across the membrane in addition to electron transfer, pumping 2 protons/electron. The sequence is that of Cytochrome bo(3) ubiquinol oxidase subunit 3 (cyoC) from Buchnera aphidicola subsp. Baizongia pistaciae (strain Bp).